Consider the following 405-residue polypeptide: Argininosuccinate synthase (405 aa).

ATP contacts are provided by residues 10 to 18 (AYSGGLDTS) and Ala-37. Residues Tyr-88 and Ser-93 each contribute to the L-citrulline site. Residue Gly-118 participates in ATP binding. Residues Thr-120, Asn-124, and Asp-125 each coordinate L-aspartate. Asn-124 contributes to the L-citrulline binding site. 5 residues coordinate L-citrulline: Arg-128, Ser-177, Ser-186, Glu-263, and Tyr-275.

Belongs to the argininosuccinate synthase family. Type 1 subfamily. Homotetramer.

The protein resides in the cytoplasm. It catalyses the reaction L-citrulline + L-aspartate + ATP = 2-(N(omega)-L-arginino)succinate + AMP + diphosphate + H(+). It functions in the pathway amino-acid biosynthesis; L-arginine biosynthesis; L-arginine from L-ornithine and carbamoyl phosphate: step 2/3. This chain is Argininosuccinate synthase, found in Acetivibrio thermocellus (strain ATCC 27405 / DSM 1237 / JCM 9322 / NBRC 103400 / NCIMB 10682 / NRRL B-4536 / VPI 7372) (Clostridium thermocellum).